The following is a 335-amino-acid chain: Ketol-acid reductoisomerase (NADP(+)) (335 aa).

The region spanning Ala2–Thr182 is the KARI N-terminal Rossmann domain. NADP(+) contacts are provided by residues Tyr25–Gln28, Arg48, Ser51, Ser53, and Asp83–Gln86. His108 is an active-site residue. An NADP(+)-binding site is contributed by Gly134. In terms of domain architecture, KARI C-terminal knotted spans Thr183–Leu328. Asp191, Glu195, Glu227, and Glu231 together coordinate Mg(2+). Position 252 (Ser252) interacts with substrate.

It belongs to the ketol-acid reductoisomerase family. Mg(2+) serves as cofactor.

The enzyme catalyses (2R)-2,3-dihydroxy-3-methylbutanoate + NADP(+) = (2S)-2-acetolactate + NADPH + H(+). The catalysed reaction is (2R,3R)-2,3-dihydroxy-3-methylpentanoate + NADP(+) = (S)-2-ethyl-2-hydroxy-3-oxobutanoate + NADPH + H(+). It participates in amino-acid biosynthesis; L-isoleucine biosynthesis; L-isoleucine from 2-oxobutanoate: step 2/4. It functions in the pathway amino-acid biosynthesis; L-valine biosynthesis; L-valine from pyruvate: step 2/4. Its function is as follows. Involved in the biosynthesis of branched-chain amino acids (BCAA). Catalyzes an alkyl-migration followed by a ketol-acid reduction of (S)-2-acetolactate (S2AL) to yield (R)-2,3-dihydroxy-isovalerate. In the isomerase reaction, S2AL is rearranged via a Mg-dependent methyl migration to produce 3-hydroxy-3-methyl-2-ketobutyrate (HMKB). In the reductase reaction, this 2-ketoacid undergoes a metal-dependent reduction by NADPH to yield (R)-2,3-dihydroxy-isovalerate. The polypeptide is Ketol-acid reductoisomerase (NADP(+)) (Methanosarcina barkeri (strain Fusaro / DSM 804)).